The primary structure comprises 418 residues: Glutamyl-tRNA reductase (418 aa).

Substrate is bound by residues 49 to 52, S109, 114 to 116, and Q120; these read TCNR and EPQ. C50 functions as the Nucleophile in the catalytic mechanism. 189–194 provides a ligand contact to NADP(+); sequence GAGETI.

Belongs to the glutamyl-tRNA reductase family. As to quaternary structure, homodimer.

The catalysed reaction is (S)-4-amino-5-oxopentanoate + tRNA(Glu) + NADP(+) = L-glutamyl-tRNA(Glu) + NADPH + H(+). Its pathway is porphyrin-containing compound metabolism; protoporphyrin-IX biosynthesis; 5-aminolevulinate from L-glutamyl-tRNA(Glu): step 1/2. Its function is as follows. Catalyzes the NADPH-dependent reduction of glutamyl-tRNA(Glu) to glutamate 1-semialdehyde (GSA). The chain is Glutamyl-tRNA reductase from Escherichia coli O127:H6 (strain E2348/69 / EPEC).